The following is a 90-amino-acid chain: Protein S100-A6 (90 aa).

EF-hand domains follow at residues 12 to 47 (LIGIFHKYSGKEGDKHTLSKKELKELIQKELTIGSK) and 48 to 83 (LQDAEIVKLMDDLDRNKDQEVNFQEYITFLGALAMI). Ca(2+)-binding residues include T28 and E33. Position 40 is an N6-acetyllysine (K40). Position 46 is a phosphoserine (S46). K47 carries the post-translational modification N6-acetyllysine; alternate. K47 is modified (N6-succinyllysine; alternate). The Ca(2+) site is built by D61, N63, D65, E67, and E72.

Belongs to the S-100 family. Homodimer; head to tail assembly of 2 subunits. Interacts with CACYBP in a calcium-dependent manner. Interacts with ANXA2 and ANXA11 (via N-terminus). Interacts with SUGT1. Interacts with TP53; has higher affinity for TP53 that is phosphorylated on its N-terminal domain, and lower affinity for TP53 that is phosphorylated on its C-terminal domain. Interacts with tropomyosin. Interacts with FKBP4. Interacts with PPP5C (via TPR repeats); the interaction is calcium-dependent and modulates PPP5C activity. Interacts with TPPP; this interaction inhibits TPPP dimerization.

The protein localises to the nucleus envelope. It localises to the cytoplasm. Its subcellular location is the cell membrane. Functionally, may function as calcium sensor and modulator, contributing to cellular calcium signaling. May function by interacting with other proteins, such as TPR-containing proteins, and indirectly play a role in many physiological processes such as the reorganization of the actin cytoskeleton and in cell motility. Binds 2 calcium ions. Calcium binding is cooperative. The protein is Protein S100-A6 (S100A6) of Oryctolagus cuniculus (Rabbit).